Here is a 280-residue protein sequence, read N- to C-terminus: Nitrogenase iron protein (280 aa).

Gly8–Ser15 contacts ATP. Cys95 lines the [4Fe-4S] cluster pocket. Arg98 is subject to ADP-ribosylarginine; by dinitrogenase reductase ADP-ribosyltransferase. [4Fe-4S] cluster is bound at residue Cys128.

Belongs to the NifH/BchL/ChlL family. As to quaternary structure, homodimer. [4Fe-4S] cluster is required as a cofactor. In terms of processing, the reversible ADP-ribosylation of Arg-98 inactivates the nitrogenase reductase and regulates nitrogenase activity.

It catalyses the reaction N2 + 8 reduced [2Fe-2S]-[ferredoxin] + 16 ATP + 16 H2O = H2 + 8 oxidized [2Fe-2S]-[ferredoxin] + 2 NH4(+) + 16 ADP + 16 phosphate + 6 H(+). Functionally, the key enzymatic reactions in nitrogen fixation are catalyzed by the nitrogenase complex, which has 2 components: the iron protein and the molybdenum-iron protein. This Methanospirillum hungatei JF-1 (strain ATCC 27890 / DSM 864 / NBRC 100397 / JF-1) protein is Nitrogenase iron protein.